The following is a 639-amino-acid chain: CREB3 regulatory factor (639 aa).

Residues 302 to 422 (PLPQEGPGSL…SVEDLKEVTS (121 aa)) are disordered. The segment covering 310–328 (SLAAGESSSLSASTSVSDS) has biased composition (low complexity). Positions 339–351 (LFVSDNLGEQPTK) are enriched in polar residues. A compositionally biased stretch (acidic residues) spans 355-370 (EEDEEDEEDVDDEDHD). Basic and acidic residues predominate over residues 371 to 380 (EGFGSEHELS). Positions 381–401 (ENEEEEEEEEDYEDDKDDDIS) are enriched in acidic residues. In terms of domain architecture, bZIP spans 521-584 (TARPRSRKEK…VNRVQNPRDE (64 aa)). Residues 523-532 (RPRSRKEKNK) form a basic motif region. The interval 533–540 (LASRACRL) is leucine-zipper.

The protein belongs to the bZIP family. CREBRF subfamily. As to quaternary structure, interacts (via leucine-zipper domain) with CREB3 (via leucine-zipper domain); the interaction promotes CREB3 degradation. In terms of processing, probably degraded by the proteasome.

It is found in the nucleus. In terms of biological role, acts as a negative regulator of the endoplasmic reticulum stress response or unfolded protein response (UPR). Represses the transcriptional activity of CREB3 during the UPR. Recruits CREB3 into nuclear foci. This chain is CREB3 regulatory factor (CREBRF), found in Homo sapiens (Human).